Consider the following 134-residue polypeptide: ATP synthase epsilon chain (134 aa).

The protein belongs to the ATPase epsilon chain family. In terms of assembly, F-type ATPases have 2 components, CF(1) - the catalytic core - and CF(0) - the membrane proton channel. CF(1) has five subunits: alpha(3), beta(3), gamma(1), delta(1), epsilon(1). CF(0) has three main subunits: a, b and c.

The protein resides in the cell membrane. In terms of biological role, produces ATP from ADP in the presence of a proton gradient across the membrane. The sequence is that of ATP synthase epsilon chain from Ruminiclostridium cellulolyticum (strain ATCC 35319 / DSM 5812 / JCM 6584 / H10) (Clostridium cellulolyticum).